The sequence spans 203 residues: Urease accessory protein UreG (203 aa).

Residue 11–18 (GPVGSGKT) coordinates GTP.

This sequence belongs to the SIMIBI class G3E GTPase family. UreG subfamily. Homodimer. UreD, UreF and UreG form a complex that acts as a GTP-hydrolysis-dependent molecular chaperone, activating the urease apoprotein by helping to assemble the nickel containing metallocenter of UreC. The UreE protein probably delivers the nickel.

The protein resides in the cytoplasm. Functionally, facilitates the functional incorporation of the urease nickel metallocenter. This process requires GTP hydrolysis, probably effectuated by UreG. In Prochlorococcus marinus (strain MIT 9301), this protein is Urease accessory protein UreG.